Reading from the N-terminus, the 751-residue chain is Catalase-peroxidase 2 (751 aa).

The N-terminal stretch at Met-1–Ala-27 is a signal peptide. The segment at residues Trp-115–Tyr-238 is a cross-link (tryptophyl-tyrosyl-methioninium (Trp-Tyr) (with M-264)). The Proton acceptor role is filled by His-116. Residues Tyr-238–Met-264 constitute a cross-link (tryptophyl-tyrosyl-methioninium (Tyr-Met) (with W-115)). His-279 contacts heme b.

This sequence belongs to the peroxidase family. Peroxidase/catalase subfamily. Homodimer or homotetramer. Requires heme b as cofactor. In terms of processing, formation of the three residue Trp-Tyr-Met cross-link is important for the catalase, but not the peroxidase activity of the enzyme.

The catalysed reaction is H2O2 + AH2 = A + 2 H2O. The enzyme catalyses 2 H2O2 = O2 + 2 H2O. Its function is as follows. Bifunctional enzyme with both catalase and broad-spectrum peroxidase activity. The chain is Catalase-peroxidase 2 from Idiomarina loihiensis (strain ATCC BAA-735 / DSM 15497 / L2-TR).